We begin with the raw amino-acid sequence, 77 residues long: MNVKVFRVSGYFEKNGRKFKFTKEYRALKEEHVKELVYSDIGSKHKVKRRKIFIKEIKEIRPEEAEDIVVRRLSLEL.

It belongs to the eukaryotic ribosomal protein eL20 family. Part of the 50S ribosomal subunit. Binds 23S rRNA.

This is Large ribosomal subunit protein eL20 from Pyrococcus abyssi (strain GE5 / Orsay).